We begin with the raw amino-acid sequence, 415 residues long: Serine hydroxymethyltransferase 1 (415 aa).

(6S)-5,6,7,8-tetrahydrofolate is bound by residues Leu122 and 126–128 (GHL). At Lys230 the chain carries N6-(pyridoxal phosphate)lysine.

It belongs to the SHMT family. In terms of assembly, homodimer. Pyridoxal 5'-phosphate serves as cofactor.

The protein localises to the cytoplasm. The catalysed reaction is (6R)-5,10-methylene-5,6,7,8-tetrahydrofolate + glycine + H2O = (6S)-5,6,7,8-tetrahydrofolate + L-serine. The protein operates within one-carbon metabolism; tetrahydrofolate interconversion. It functions in the pathway amino-acid biosynthesis; glycine biosynthesis; glycine from L-serine: step 1/1. Its function is as follows. Catalyzes the reversible interconversion of serine and glycine with tetrahydrofolate (THF) serving as the one-carbon carrier. This reaction serves as the major source of one-carbon groups required for the biosynthesis of purines, thymidylate, methionine, and other important biomolecules. Also exhibits THF-independent aldolase activity toward beta-hydroxyamino acids, producing glycine and aldehydes, via a retro-aldol mechanism. This Ralstonia nicotianae (strain ATCC BAA-1114 / GMI1000) (Ralstonia solanacearum) protein is Serine hydroxymethyltransferase 1.